The following is a 370-amino-acid chain: GTPase Obg (370 aa).

Positions 1 to 159 constitute an Obg domain; it reads MKFIDEARIE…RMLRLELKVL (159 aa). An OBG-type G domain is found at 160-334; it reads ADVGLLGMPN…LCYAIYDYLA (175 aa). GTP-binding positions include 166–173, 191–195, 213–216, 284–287, and 315–317; these read GMPNAGKS, FTTLA, DIPG, NKLD, and SAL. Mg(2+)-binding residues include Ser173 and Thr193. Residues 344–370 form a disordered region; the sequence is EEEDLATDVRFRDAPPADGGATPGGDA.

Belongs to the TRAFAC class OBG-HflX-like GTPase superfamily. OBG GTPase family. In terms of assembly, monomer. Requires Mg(2+) as cofactor.

The protein localises to the cytoplasm. An essential GTPase which binds GTP, GDP and possibly (p)ppGpp with moderate affinity, with high nucleotide exchange rates and a fairly low GTP hydrolysis rate. Plays a role in control of the cell cycle, stress response, ribosome biogenesis and in those bacteria that undergo differentiation, in morphogenesis control. The protein is GTPase Obg of Burkholderia ambifaria (strain MC40-6).